The chain runs to 345 residues: S-adenosylmethionine:tRNA ribosyltransferase-isomerase (345 aa).

This sequence belongs to the QueA family. Monomer.

Its subcellular location is the cytoplasm. It catalyses the reaction 7-aminomethyl-7-carbaguanosine(34) in tRNA + S-adenosyl-L-methionine = epoxyqueuosine(34) in tRNA + adenine + L-methionine + 2 H(+). It participates in tRNA modification; tRNA-queuosine biosynthesis. Its function is as follows. Transfers and isomerizes the ribose moiety from AdoMet to the 7-aminomethyl group of 7-deazaguanine (preQ1-tRNA) to give epoxyqueuosine (oQ-tRNA). This is S-adenosylmethionine:tRNA ribosyltransferase-isomerase from Finegoldia magna (strain ATCC 29328 / DSM 20472 / WAL 2508) (Peptostreptococcus magnus).